A 181-amino-acid polypeptide reads, in one-letter code: 6,7-dimethyl-8-ribityllumazine synthase (181 aa).

Residues Phe24, 62 to 64 (SFE), and 86 to 88 (AII) each bind 5-amino-6-(D-ribitylamino)uracil. Residue 91 to 92 (QT) coordinates (2S)-2-hydroxy-3-oxobutyl phosphate. Residue His94 is the Proton donor of the active site. Phe119 serves as a coordination point for 5-amino-6-(D-ribitylamino)uracil. Arg133 serves as a coordination point for (2S)-2-hydroxy-3-oxobutyl phosphate.

The protein belongs to the DMRL synthase family.

It catalyses the reaction (2S)-2-hydroxy-3-oxobutyl phosphate + 5-amino-6-(D-ribitylamino)uracil = 6,7-dimethyl-8-(1-D-ribityl)lumazine + phosphate + 2 H2O + H(+). It functions in the pathway cofactor biosynthesis; riboflavin biosynthesis; riboflavin from 2-hydroxy-3-oxobutyl phosphate and 5-amino-6-(D-ribitylamino)uracil: step 1/2. Its function is as follows. Catalyzes the formation of 6,7-dimethyl-8-ribityllumazine by condensation of 5-amino-6-(D-ribitylamino)uracil with 3,4-dihydroxy-2-butanone 4-phosphate. This is the penultimate step in the biosynthesis of riboflavin. This Microcystis aeruginosa (strain NIES-843 / IAM M-2473) protein is 6,7-dimethyl-8-ribityllumazine synthase.